Here is a 676-residue protein sequence, read N- to C-terminus: WD repeat-containing protein 48 (676 aa).

Tyrosine 28 is subject to Phosphotyrosine. 8 WD repeats span residues 28-67 (YNRN…QDPY), 73-112 (HHTD…CMST), 115-154 (THKD…ALTA), 166-205 (GNKD…KLMK), 208-247 (GHTD…CIAT), 250-289 (VHDE…IRVL), 292-334 (EEKA…NFRA), and 358-397 (KGGA…KVED). Lysine 214 is subject to N6-acetyllysine. Position 578 is an N6-acetyllysine (lysine 578). Residues 607-628 (LDNESQTTSSSNNEKPEQEKEE) are disordered. Low complexity predominate over residues 609 to 619 (NESQTTSSSNN). Threonine 613 is modified (phosphothreonine).

This sequence belongs to the WD repeat WDR48 family. Interacts with USP46. Interacts with USP1. Interacts with USP12. Component of the USP12-WDR20-WDR48 deubiquitinating complex. Component of the USP12-DMWD-WDR48 deubiquitinating complex. Interacts with PHLPP1. Interacts with RAD51AP1; the interaction is direct and promotes formation of a trimeric complex with RAD51 via RAD51AP1. Interacts with ATAD5; the interaction regulates USP1-mediated PCNA deubiquitination. Interacts with RAD51; the interaction is enhanced under replication stress. Interacts with ITCH; the interaction is more efficient when both USP12 and WDR48/UAF1 are involved and may facilitate recruitment of the USP12 deubiquitinating complex to Notch.

The protein resides in the nucleus. Its subcellular location is the cytoplasm. The protein localises to the lysosome. It is found in the late endosome. Functionally, regulator of deubiquitinating complexes, which acts as a strong activator of USP1, USP12 and USP46. Enhances the USP1-mediated deubiquitination of FANCD2; USP1 being almost inactive by itself. Activates deubiquitination by increasing the catalytic turnover without increasing the affinity of deubiquitinating enzymes for the substrate. Also activates deubiquitinating activity of complexes containing USP12. Docks at the distal end of the USP12 fingers domain and induces a cascade of structural changes leading to the activation of the enzyme. Together with RAD51AP1, promotes DNA repair by stimulating RAD51-mediated homologous recombination. Binds single-stranded DNA (ssDNA) and double-stranded DNA (dsDNA). DNA-binding is required both for USP1-mediated deubiquitination of FANCD2 and stimulation of RAD51-mediated homologous recombination: both WDR48/UAF1 and RAD51AP1 have coordinated role in DNA-binding during these processes. Together with ATAD5 and by regulating USP1 activity, has a role in PCNA-mediated translesion synthesis (TLS) by deubiquitinating monoubiquitinated PCNA. Together with ATAD5, has a role in recruiting RAD51 to stalled forks during replication stress. This is WD repeat-containing protein 48 (Wdr48) from Mus musculus (Mouse).